The sequence spans 654 residues: Hepatocyte growth factor activator serine proteases (654 aa).

The signal sequence occupies residues methionine 1–proline 33. The tract at residues glutamine 34–threonine 100 is disordered. Positions glutamine 34–arginine 370 are cleaved as a propeptide — removed in mature form. Asparagine 38 and asparagine 46 each carry an N-linked (GlcNAc...) asparagine glycan. Positions proline 57 to leucine 81 are enriched in low complexity. The Fibronectin type-II domain occupies valine 101–glutamine 148. Disulfide bonds link cysteine 106–cysteine 131, cysteine 120–cysteine 146, cysteine 162–cysteine 173, cysteine 167–cysteine 184, cysteine 186–cysteine 195, cysteine 200–cysteine 228, cysteine 226–cysteine 235, cysteine 243–cysteine 254, cysteine 248–cysteine 265, cysteine 267–cysteine 276, cysteine 284–cysteine 365, cysteine 305–cysteine 347, cysteine 336–cysteine 360, cysteine 393–cysteine 520, cysteine 431–cysteine 447, cysteine 439–cysteine 509, cysteine 534–cysteine 603, cysteine 566–cysteine 582, and cysteine 593–cysteine 621. Residues alanine 158–aspartate 196 enclose the EGF-like 1 domain. The region spanning glutamate 198–threonine 238 is the Fibronectin type-I domain. An EGF-like 2 domain is found at arginine 239–asparagine 277. Positions arginine 283 to cysteine 365 constitute a Kringle domain. Asparagine 288 carries N-linked (GlcNAc...) asparagine glycosylation. In terms of domain architecture, Peptidase S1 spans isoleucine 407 to tryptophan 645. Histidine 446 functions as the Charge relay system in the catalytic mechanism. 2 N-linked (GlcNAc...) asparagine glycosylation sites follow: asparagine 467 and asparagine 491. Aspartate 496 functions as the Charge relay system in the catalytic mechanism. A glycan (N-linked (GlcNAc...) asparagine) is linked at asparagine 545. Serine 597 functions as the Charge relay system in the catalytic mechanism.

This sequence belongs to the peptidase S1 family. As to quaternary structure, heterodimer of a short chain and a long chain linked by a disulfide bond. In terms of processing, the active form of HGFAC presents in the serum is derived from the COOH-terminal region of the precursor by the cleavage of bonds between Arg-370 and Ile-371 and Arg-406 and Ile-407. As to expression, liver.

Its subcellular location is the secreted. Functionally, serine protease that hydrolyzes the inactive zymogen hepatocyte growth factor (HGFsc) to an activated disulfide-linked heterodimer, then initiating hepatocyte growth factor receptor signaling pathway. This Canis lupus familiaris (Dog) protein is Hepatocyte growth factor activator serine proteases (HGFAC).